A 116-amino-acid polypeptide reads, in one-letter code: MNLILLMVIGFLIFIGTYMILSVNLIRIVIGISIYTHAGNLIIMSMGNYSKNKVEPLIGEGSQNFVDPLLQAIVLTAIVIGFAMTAFLLVLVYRTYRVTKEDEIDVLRGDDDDANE.

3 helical membrane-spanning segments follow: residues 3–23 (LILL…ILSV), 28–48 (IVIG…SMGN), and 72–92 (AIVL…LVLV).

The protein belongs to the CPA3 antiporters (TC 2.A.63) subunit C family. May form a heterooligomeric complex that consists of seven subunits: mnhA2, mnhB2, mnhC2, mnhD2, mnhE2, mnhF2 and mnhG2.

The protein resides in the cell membrane. This Staphylococcus saprophyticus subsp. saprophyticus (strain ATCC 15305 / DSM 20229 / NCIMB 8711 / NCTC 7292 / S-41) protein is Putative antiporter subunit mnhC2 (mnhC2).